A 272-amino-acid polypeptide reads, in one-letter code: PHD finger protein ALFIN-LIKE 6 (272 aa).

Residues Met1–Ala23 are compositionally biased toward gly residues. Disordered regions lie at residues Met1 to Pro24 and Gln162 to Leu218. A compositionally biased stretch (low complexity) spans Pro168–Gln182. Over residues Ser183–Glu200 the composition is skewed to basic and acidic residues. Residues Gly201–His214 show a composition bias toward acidic residues. Residues Asn216–Lys268 form a PHD-type zinc finger.

This sequence belongs to the Alfin family.

It localises to the nucleus. Functionally, histone-binding component that specifically recognizes H3 tails trimethylated on 'Lys-4' (H3K4me3), which mark transcription start sites of virtually all active genes. The protein is PHD finger protein ALFIN-LIKE 6 of Oryza sativa subsp. japonica (Rice).